Here is a 1099-residue protein sequence, read N- to C-terminus: SLIT-ROBO Rho GTPase-activating protein 3 (1099 aa).

One can recognise an F-BAR domain in the interval A19–D314. Positions H205–R225 are disordered. The stretch at Q352 to T392 forms a coiled coil. Residues E471 to P493 are disordered. Residues G506–F694 form the Rho-GAP domain. One can recognise an SH3 domain in the interval V744–M803. Positions D809–S820 are enriched in polar residues. Residues D809–F847 form a disordered region. 5 positions are modified to phosphoserine: S817, S820, S821, S837, and S858. 2 disordered regions span residues A861–K911 and P926–G950. Over residues P926–S936 the composition is skewed to basic and acidic residues. Polar residues predominate over residues M937–S947. Residues H952–A987 are a coiled coil. Position 954 is a phosphoserine (S954). Residues L995–M1099 are disordered. Composition is skewed to low complexity over residues R1026–T1038 and V1060–S1074. Positions P1089–M1099 are enriched in polar residues.

As to quaternary structure, homodimer. Forms a heterooligomer with SRGAP1 and SRGAP2 through its F-BAR domain. Interacts with WASF1. Probably interacts with ROBO1. Interacts with FASLG. As to expression, highly expressed in adult and fetal brain. Expressed at low levels in kidney. Isoform 3 is expressed in the kidney but is absent in the brain.

GTPase-activating protein for RAC1 and perhaps Cdc42, but not for RhoA small GTPase. May attenuate RAC1 signaling in neurons. This Homo sapiens (Human) protein is SLIT-ROBO Rho GTPase-activating protein 3 (SRGAP3).